The sequence spans 75 residues: Small ribosomal subunit protein bS18 (75 aa).

Belongs to the bacterial ribosomal protein bS18 family. Part of the 30S ribosomal subunit. Forms a tight heterodimer with protein bS6.

Functionally, binds as a heterodimer with protein bS6 to the central domain of the 16S rRNA, where it helps stabilize the platform of the 30S subunit. This is Small ribosomal subunit protein bS18 from Legionella pneumophila (strain Paris).